The primary structure comprises 192 residues: Phosphoheptose isomerase (192 aa).

The SIS domain maps to 35-192 (LIETLENQGK…CIERHFAHKN (158 aa)). Position 50-52 (50-52 (NGG)) interacts with substrate. Positions 59 and 63 each coordinate Zn(2+). Substrate-binding positions include Glu-63, 92-93 (ND), 118-120 (STS), Ser-123, and Gln-170. Zn(2+)-binding residues include Gln-170 and His-178.

Belongs to the SIS family. GmhA subfamily. Homotetramer. It depends on Zn(2+) as a cofactor.

The protein localises to the cytoplasm. It catalyses the reaction 2 D-sedoheptulose 7-phosphate = D-glycero-alpha-D-manno-heptose 7-phosphate + D-glycero-beta-D-manno-heptose 7-phosphate. Its pathway is carbohydrate biosynthesis; D-glycero-D-manno-heptose 7-phosphate biosynthesis; D-glycero-alpha-D-manno-heptose 7-phosphate and D-glycero-beta-D-manno-heptose 7-phosphate from sedoheptulose 7-phosphate: step 1/1. Catalyzes the isomerization of sedoheptulose 7-phosphate in D-glycero-D-manno-heptose 7-phosphate. This chain is Phosphoheptose isomerase, found in Helicobacter pylori (strain P12).